Here is a 1580-residue protein sequence, read N- to C-terminus: Dynamin-binding protein (1580 aa).

Met-1 bears the N-acetylmethionine mark. 3 SH3 domains span residues 2-61 (EPGS…IVTI), 66-127 (EGER…ELCL), and 146-205 (YSLG…LLGP). Disordered stretches follow at residues 211-245 (ESVNSRSGDDSAVNGEVDVPPEEAESGGDEDDQQS), 304-446 (NRTE…LVPL), 500-546 (YAQK…DSLD), and 589-688 (RGSS…AQTF). Acidic residues predominate over residues 229–243 (VPPEEAESGGDEDDQ). In terms of domain architecture, SH3 4 spans 244 to 303 (QSGTYGIALYRFQALETNELDFEVGDRIQILGTLEDGWLEGCLKGKTGVFPHRFVKLCPS). Composition is skewed to polar residues over residues 422–439 (QKSQHYLTAGGSHQTSDP) and 502–513 (QKHQTSTENTAS). Positions 516 to 527 (DPPERPERRPGL) are enriched in basic and acidic residues. The span at 608-617 (RPPPPRPRTP) shows a compositional bias: pro residues. Positions 671–682 (APEKEDSEHMEK) are enriched in basic and acidic residues. The residue at position 683 (Ser-683) is a Phosphoserine. The stretch at 694–755 (LARIRDVEQD…LELQQLRDMT (62 aa)) forms a coiled coil. Residues 783–970 (KRAKVVAELL…KEINVNINEY (188 aa)) form the DH domain. The 210-residue stretch at 1011–1220 (LKHLTGFAPQ…LKATDREGNL (210 aa)) folds into the BAR domain. Residues 1288–1351 (PPEKLFHVQR…YSSFLKPYNP (64 aa)) form the SH3 5 domain. A compositionally biased stretch (low complexity) spans 1356–1365 (SDASVASHSS). Disordered regions lie at residues 1356–1384 (SDASVASHSSTESEHSGSSPGCHRQNSHS) and 1426–1514 (TGHP…GSSE). A compositionally biased stretch (polar residues) spans 1426–1440 (TGHPETGPSTCSSDP). The SH3 6 domain maps to 1516-1579 (EGNQVYFAIY…PSNYIRKTEY (64 aa)).

Binds DNM1 via its N-terminal SH3 domains. The C-terminal SH3 domain binds a complex containing actin, tubulin, Hsp70 and actin-regulatory proteins, such as ENAH, EVL, WIRE, CR16, WAVE1 and NAP1L1. Interacts with FASLG. Interacts (via SH3 domain 6) with WASL. Interacts (via SH3 domain 6) interacts with ENAH. Interacts (via C-terminal domain) with TJP1; required for the apical cell-cell junction localization of DNMBP.

The protein localises to the cytoplasm. It is found in the golgi apparatus. The protein resides in the golgi stack. Its subcellular location is the cytoskeleton. It localises to the synapse. The protein localises to the cell junction. In terms of biological role, plays a critical role as a guanine nucleotide exchange factor (GEF) for CDC42 in several intracellular processes associated with the actin and microtubule cytoskeleton. Regulates the structure of apical junctions in epithelial cells. Participates in the normal lumenogenesis of epithelial cell cysts by regulating spindle orientation. Plays a role in ciliogenesis. May play a role in membrane trafficking between the cell surface and the Golgi. The chain is Dynamin-binding protein from Mus musculus (Mouse).